The following is an 807-amino-acid chain: Phenylalanine--tRNA ligase beta subunit (807 aa).

The tRNA-binding domain maps to 39–153 (SARAQGVVVG…SLPPNGSPVA (115 aa)). The region spanning 407 to 491 (AEAGPVLLRR…RLVGFDRFGA (85 aa)) is the B5 domain. The Mg(2+) site is built by aspartate 469, aspartate 475, glutamate 478, and glutamate 479. Residues 713-806 (PTVPFSERDL…LSKQFQAELR (94 aa)) enclose the FDX-ACB domain.

It belongs to the phenylalanyl-tRNA synthetase beta subunit family. Type 1 subfamily. In terms of assembly, tetramer of two alpha and two beta subunits. The cofactor is Mg(2+).

It localises to the cytoplasm. The enzyme catalyses tRNA(Phe) + L-phenylalanine + ATP = L-phenylalanyl-tRNA(Phe) + AMP + diphosphate + H(+). This chain is Phenylalanine--tRNA ligase beta subunit, found in Synechococcus sp. (strain CC9605).